A 293-amino-acid polypeptide reads, in one-letter code: Probable mediator of RNA polymerase II transcription subunit 15b (293 aa).

The protein belongs to the plant Mediator complex subunit 15 family. As to quaternary structure, component of the Mediator complex.

The protein localises to the nucleus. Component of the Mediator complex, a coactivator involved in the regulated transcription of nearly all RNA polymerase II-dependent genes. Mediator functions as a bridge to convey information from gene-specific regulatory proteins to the basal RNA polymerase II transcription machinery. The Mediator complex, having a compact conformation in its free form, is recruited to promoters by direct interactions with regulatory proteins and serves for the assembly of a functional preinitiation complex with RNA polymerase II and the general transcription factors. This is Probable mediator of RNA polymerase II transcription subunit 15b (MED15B) from Arabidopsis thaliana (Mouse-ear cress).